We begin with the raw amino-acid sequence, 377 residues long: Tryptophan 2,3-dioxygenase (377 aa).

Substrate contacts are provided by residues 57-61 (FIITH) and R128. H313 contacts heme. T328 provides a ligand contact to substrate.

It belongs to the tryptophan 2,3-dioxygenase family. Homotetramer. Dimer of dimers. Heme serves as cofactor.

The catalysed reaction is L-tryptophan + O2 = N-formyl-L-kynurenine. It participates in amino-acid degradation; L-tryptophan degradation via kynurenine pathway; L-kynurenine from L-tryptophan: step 1/2. Its pathway is pigment biosynthesis; ommochrome biosynthesis. Functionally, heme-dependent dioxygenase that catalyzes the oxidative cleavage of the L-tryptophan (L-Trp) pyrrole ring and converts L-tryptophan to N-formyl-L-kynurenine. Catalyzes the oxidative cleavage of the indole moiety. This chain is Tryptophan 2,3-dioxygenase, found in Drosophila grimshawi (Hawaiian fruit fly).